The chain runs to 1060 residues: MRIFSGDNKVVDSLASNPGLMSPSNFGGDFGSRLKVNVTSKKKLNDSSPTSPMESSPVSPELVPILTLLNAHTHRRYHEGVFLILQDLNNNGTHAARKWKDVYGVLLGTQLALWDAKELAEFTDPSCPVSEKKLKEVASKPTYINLTDATLRTLDNSDNIVMECGKNLTNALVVSTTLKNRYFLQFGNKESFNAWNSAIRLCLYECSSLQEAYTGAFISSRGAKLGDIRILLTNRKYDYKDWVSVRFGAGMPWKRCYAVISQSSSKKKGHFGEINLYENDKKVKKNHAMATIVEAKALYAVYPSSPKLIDSSTIIKVVGSVKFEKKESAQEKDVFIMPEKHQAVPSYDTIIRFLIPAMDTFKLYGRPEKLLSSKNDPHSLLFGLPVLPHIYYLEVEDLLPLTNSVSSLHWSNNEWKEHISDILQRKIAQGYCGCNSTSNITSPLPSPFLGSADLFERADGVLSPKLSYGSKSSSNNSSKNSLPKRERVKLSSSSEQDLNNSDSPSIKRKSPPLVISESPHKVHTPTDASFRTRVTEGSPYAKQRHPKPFASSVNDSPSDRAKSRTVPYNNNDRKATTPEKFERGETSCGKNVDESLEKVRNMKLEIPESNFDKFMTDKNLLSVDSKCSNEKKLSVESDLSAIYEKYSNGPFGHTEGLNGSSDETYLRFQRASVHSESNYNSRKSFTPSDFSNGNEEEHAVLQELNSLTQRINELGMESINSNSDSDRINGSYSQVDFGNNNDEDDMNLFDPDFMAQDQLRAEERDYNKDDRTPLAKVPAAFQSTGLGITPDDDIERQYITEHRSRHEVPKRSPEKPSNPLEIGNPYAKPGTRLNTTHTHSKTDRSITPQRGQPVPSGQQISSYVQPANINSPNKMYGANNSAMGSPRNPKTRAPPGPYNQGWNNRPSPSNIYQRPHPSDTQPQAYHLPGNPYSTGNRPNMQAQYHPQQVPMPILQQPNRPYQPYAMNTHMGSPGGYAGAAPPFQPANVNYNTRPQQPWPTPNSPSAHYRPPPNLNQPQNGSAGYYRPPAPQLQNSQARPQKKDGFSQFMPSATTKNPYAQ.

The PH domain occupies 75-204 (RRYHEGVFLI…WNSAIRLCLY (130 aa)). Residues 465–481 (KLSYGSKSSSNNSSKNS) are compositionally biased toward low complexity. 3 disordered regions span residues 465-589 (KLSY…TSCG), 801-942 (EHRS…NMQA), and 955-1060 (QQPN…PYAQ). Polar residues predominate over residues 490-504 (LSSSSEQDLNNSDSP). A phosphoserine mark is found at serine 491, serine 510, serine 518, serine 538, and serine 556. Basic and acidic residues-rich tracts occupy residues 571-589 (NDRK…TSCG) and 801-814 (EHRS…RSPE). Polar residues predominate over residues 845 to 883 (SITPQRGQPVPSGQQISSYVQPANINSPNKMYGANNSAM). Phosphoserine is present on residues serine 871 and serine 885. 3 stretches are compositionally biased toward polar residues: residues 900–923 (QGWN…TQPQ), 931–942 (PYSTGNRPNMQA), and 1048–1060 (FMPS…PYAQ).

It belongs to the CAF120 family. Subunit of the 1.0 MDa CCR4-NOT core complex that contains CCR4, CAF1, CAF120, NOT1, NOT2, NOT3, NOT4, NOT5, CAF40 and CAF130. In the complex interacts with NOT1. The core complex probably is part of a less characterized 1.9 MDa CCR4-NOT complex.

Its subcellular location is the cytoplasm. It is found in the nucleus. The protein resides in the bud neck. Its function is as follows. Acts as a component of the CCR4-NOT core complex, which in the nucleus seems to be a general transcription factor, and in the cytoplasm the major mRNA deadenylase involved in mRNA turnover. The NOT protein subcomplex negatively regulates the basal and activated transcription of many genes. Preferentially affects TC-type TATA element-dependent transcription. Could directly or indirectly inhibit component(s) of the general transcription machinery. The protein is CCR4-NOT transcriptional complex subunit CAF120 (CAF120) of Saccharomyces cerevisiae (strain ATCC 204508 / S288c) (Baker's yeast).